The following is a 388-amino-acid chain: Chorismate synthase (388 aa).

R39 and R45 together coordinate NADP(+). Residues 132 to 134, 251 to 252, G296, 311 to 315, and R337 contribute to the FMN site; these read RSS, NA, and KPIPT.

This sequence belongs to the chorismate synthase family. As to quaternary structure, homotetramer. The cofactor is FMNH2.

It carries out the reaction 5-O-(1-carboxyvinyl)-3-phosphoshikimate = chorismate + phosphate. It functions in the pathway metabolic intermediate biosynthesis; chorismate biosynthesis; chorismate from D-erythrose 4-phosphate and phosphoenolpyruvate: step 7/7. Functionally, catalyzes the anti-1,4-elimination of the C-3 phosphate and the C-6 proR hydrogen from 5-enolpyruvylshikimate-3-phosphate (EPSP) to yield chorismate, which is the branch point compound that serves as the starting substrate for the three terminal pathways of aromatic amino acid biosynthesis. This reaction introduces a second double bond into the aromatic ring system. The chain is Chorismate synthase from Staphylococcus haemolyticus (strain JCSC1435).